The chain runs to 93 residues: Small ribosomal subunit protein uS17 (93 aa).

The protein belongs to the universal ribosomal protein uS17 family. Part of the 30S ribosomal subunit.

Its function is as follows. One of the primary rRNA binding proteins, it binds specifically to the 5'-end of 16S ribosomal RNA. The polypeptide is Small ribosomal subunit protein uS17 (Bordetella avium (strain 197N)).